A 210-amino-acid polypeptide reads, in one-letter code: Fibrillarin-like rRNA/tRNA 2'-O-methyltransferase (210 aa).

Residues 1 to 34 (MTLPSGVERHDFGGETSLATQGQPVYGERTDGDW) form a disordered region. S-adenosyl-L-methionine is bound by residues 71–72 (TT), 87–88 (EF), 112–113 (DA), and 132–135 (DVAT).

It belongs to the methyltransferase superfamily. Fibrillarin family. Interacts with nop5. Component of box C/D small ribonucleoprotein (sRNP) particles that contain rpl7ae, FlpA and nop5, plus a guide RNA.

In terms of biological role, involved in pre-rRNA and tRNA processing. Utilizes the methyl donor S-adenosyl-L-methionine to catalyze the site-specific 2'-hydroxyl methylation of ribose moieties in rRNA and tRNA. Site specificity is provided by a guide RNA that base pairs with the substrate. Methylation occurs at a characteristic distance from the sequence involved in base pairing with the guide RNA. This is Fibrillarin-like rRNA/tRNA 2'-O-methyltransferase from Haloarcula marismortui (strain ATCC 43049 / DSM 3752 / JCM 8966 / VKM B-1809) (Halobacterium marismortui).